A 400-amino-acid chain; its full sequence is Tryptophan synthase beta chain (400 aa).

Lys92 is modified (N6-(pyridoxal phosphate)lysine).

Belongs to the TrpB family. Tetramer of two alpha and two beta chains. Requires pyridoxal 5'-phosphate as cofactor.

The catalysed reaction is (1S,2R)-1-C-(indol-3-yl)glycerol 3-phosphate + L-serine = D-glyceraldehyde 3-phosphate + L-tryptophan + H2O. The protein operates within amino-acid biosynthesis; L-tryptophan biosynthesis; L-tryptophan from chorismate: step 5/5. Functionally, the beta subunit is responsible for the synthesis of L-tryptophan from indole and L-serine. The polypeptide is Tryptophan synthase beta chain (Leptospira borgpetersenii serovar Hardjo-bovis (strain JB197)).